The primary structure comprises 448 residues: Homogentisate 1,2-dioxygenase (448 aa).

His-303 acts as the Proton acceptor in catalysis. Fe cation contacts are provided by His-346 and Glu-352. Tyr-361 and His-382 together coordinate homogentisate. A Fe cation-binding site is contributed by His-382.

This sequence belongs to the homogentisate dioxygenase family. As to quaternary structure, hexamer; dimer of trimers. Requires Fe cation as cofactor.

The catalysed reaction is homogentisate + O2 = 4-maleylacetoacetate + H(+). It participates in amino-acid degradation; L-phenylalanine degradation; acetoacetate and fumarate from L-phenylalanine: step 4/6. Involved in the catabolism of homogentisate (2,5-dihydroxyphenylacetate or 2,5-OH-PhAc), a central intermediate in the degradation of phenylalanine and tyrosine. Catalyzes the oxidative ring cleavage of the aromatic ring of homogentisate to yield maleylacetoacetate. The sequence is that of Homogentisate 1,2-dioxygenase from Rhodopseudomonas palustris (strain BisB5).